We begin with the raw amino-acid sequence, 411 residues long: Arginine deiminase (411 aa).

The active-site Amidino-cysteine intermediate is C401.

This sequence belongs to the arginine deiminase family. Glycosylated.

Its subcellular location is the cytoplasm. The catalysed reaction is L-arginine + H2O = L-citrulline + NH4(+). The protein operates within amino-acid degradation; L-arginine degradation via ADI pathway; carbamoyl phosphate from L-arginine: step 1/2. The polypeptide is Arginine deiminase (Streptococcus pyogenes serotype M3 (strain ATCC BAA-595 / MGAS315)).